Here is a 253-residue protein sequence, read N- to C-terminus: Proteasome subunit alpha (253 aa).

A compositionally biased stretch (low complexity) spans alanine 232 to glycine 242. Positions alanine 232 to lysine 253 are disordered. The segment covering serine 243–lysine 253 has biased composition (acidic residues).

It belongs to the peptidase T1A family. The 20S proteasome core is composed of 14 alpha and 14 beta subunits that assemble into four stacked heptameric rings, resulting in a barrel-shaped structure. The two inner rings, each composed of seven catalytic beta subunits, are sandwiched by two outer rings, each composed of seven alpha subunits. The catalytic chamber with the active sites is on the inside of the barrel. Has a gated structure, the ends of the cylinder being occluded by the N-termini of the alpha-subunits. Is capped by the proteasome-associated ATPase, ARC.

The protein localises to the cytoplasm. Its pathway is protein degradation; proteasomal Pup-dependent pathway. The formation of the proteasomal ATPase ARC-20S proteasome complex, likely via the docking of the C-termini of ARC into the intersubunit pockets in the alpha-rings, may trigger opening of the gate for substrate entry. Interconversion between the open-gate and close-gate conformations leads to a dynamic regulation of the 20S proteasome proteolysis activity. Functionally, component of the proteasome core, a large protease complex with broad specificity involved in protein degradation. This Streptomyces avermitilis (strain ATCC 31267 / DSM 46492 / JCM 5070 / NBRC 14893 / NCIMB 12804 / NRRL 8165 / MA-4680) protein is Proteasome subunit alpha.